A 200-amino-acid chain; its full sequence is MKLDMTGDCTPVLVLMAAVLTVTGAVPVARLHGALPDARGCHIAQFKSLSPQELQAFKRAKDALEESLLLKDCRCHSRLFPRTWDLRQLQVRERPMALEAELALTLKVLEATADTDPALVDVLDQPLHTLHHILSQFRACIQPQPTAGPRTRGRLHHWLYRLQEAPKKESPGCLEASVTFNLFRLLTRDLNCVASGDLCV.

An N-terminal signal peptide occupies residues 1–25 (MKLDMTGDCTPVLVLMAAVLTVTGA).

It belongs to the lambda interferon family.

The protein localises to the secreted. Its function is as follows. Cytokine with antiviral, antitumour and immunomodulatory activities. Plays a critical role in the antiviral host defense, predominantly in the epithelial tissues. Acts as a ligand for the heterodimeric class II cytokine receptor composed of IL10RB and IFNLR1, and receptor engagement leads to the activation of the JAK/STAT signaling pathway resulting in the expression of IFN-stimulated genes (ISG), which mediate the antiviral state. Has a restricted receptor distribution and therefore restricted targets: is primarily active in epithelial cells and this cell type-selective action is because of the epithelial cell-specific expression of its receptor IFNLR1. Seems not to be essential for early virus-activated host defense in vaginal infection, but plays an important role in Toll-like receptor (TLR)-induced antiviral defense. Plays a significant role in the antiviral immune defense in the intestinal epithelium. Exerts an immunomodulatory effect by up-regulating MHC class I antigen expression. This chain is Interferon lambda-2 (IFNL2), found in Homo sapiens (Human).